The following is a 515-amino-acid chain: Bifunctional solanapyrone synthase (515 aa).

Residues 1 to 25 (MRLIILNLLSLGITPSVVGHSGPHR) form the signal peptide. A glycan (N-linked (GlcNAc...) asparagine) is linked at asparagine 66. In terms of domain architecture, FAD-binding PCMH-type spans 91-261 (APKNPACIYT…THIVQRTYPL (171 aa)). Residue histidine 128 is modified to Pros-8alpha-FAD histidine. 2 N-linked (GlcNAc...) asparagine glycosylation sites follow: asparagine 274 and asparagine 355.

The protein belongs to the oxygen-dependent FAD-linked oxidoreductase family. The cofactor is FAD.

The enzyme catalyses prosolanapyrone II + O2 = prosolanapyrone III + H2O2. It carries out the reaction prosolanapyrone III = (-)-solanapyrone A. It catalyses the reaction prosolanapyrone III = solanapyrone D. The protein operates within phytotoxin biosynthesis. In terms of biological role, bifunctional solanapyrone synthase; part of the gene cluster that mediates the biosynthesis of the phytotoxin solanapyrone, a causal agent of early blight disease of potato and tomato. The prosolanapyrone synthase sol1 is a polyketide synthase that produces the octaketide desmethylprosolanapyrone I via sequential condensations of 7 malonyl-CoA units with one acetyl-CoA unit, and one methylation step. The octaketide backbone is further methylated by the sol2 O-methyltransferase to yield prosolanapyrone I. Prosolanapyrone I is hydroxylated to prosolanapyrone II by the cytochrome P450 monooxygenase sol6. The solanapyrone synthase sol5 then catalyzes the oxidation of prosolanapyrone II and the subsequent Diels Alder cycloisomerization of the product prosolanapyrone III to solanapyrones A and D. Solanapyrones A and D are then converted into solanapyrones B and E, respectively, by the sol3 dehydrogenase. The polypeptide is Bifunctional solanapyrone synthase (sol5) (Alternaria solani).